The chain runs to 161 residues: Ribonuclease H (161 aa).

The RNase H type-1 domain maps to 5–149 (EKLAIAAATD…VDAIAVAFSK (145 aa)). Residues Asp-14, Glu-53, Asp-78, and Asp-141 each contribute to the Mg(2+) site.

The protein belongs to the RNase H family. Monomer. It depends on Mg(2+) as a cofactor.

Its subcellular location is the cytoplasm. The enzyme catalyses Endonucleolytic cleavage to 5'-phosphomonoester.. In terms of biological role, endonuclease that specifically degrades the RNA of RNA-DNA hybrids. In Prochlorococcus marinus (strain NATL2A), this protein is Ribonuclease H.